Consider the following 354-residue polypeptide: UDP-N-acetylglucosamine--N-acetylmuramyl-(pentapeptide) pyrophosphoryl-undecaprenol N-acetylglucosamine transferase (354 aa).

UDP-N-acetyl-alpha-D-glucosamine contacts are provided by residues 14-16 (TGG), Asn126, Arg162, Ser190, Ile243, 262-267 (ALTVSE), and Gln287.

This sequence belongs to the glycosyltransferase 28 family. MurG subfamily.

It localises to the cell inner membrane. The enzyme catalyses di-trans,octa-cis-undecaprenyl diphospho-N-acetyl-alpha-D-muramoyl-L-alanyl-D-glutamyl-meso-2,6-diaminopimeloyl-D-alanyl-D-alanine + UDP-N-acetyl-alpha-D-glucosamine = di-trans,octa-cis-undecaprenyl diphospho-[N-acetyl-alpha-D-glucosaminyl-(1-&gt;4)]-N-acetyl-alpha-D-muramoyl-L-alanyl-D-glutamyl-meso-2,6-diaminopimeloyl-D-alanyl-D-alanine + UDP + H(+). Its pathway is cell wall biogenesis; peptidoglycan biosynthesis. Its function is as follows. Cell wall formation. Catalyzes the transfer of a GlcNAc subunit on undecaprenyl-pyrophosphoryl-MurNAc-pentapeptide (lipid intermediate I) to form undecaprenyl-pyrophosphoryl-MurNAc-(pentapeptide)GlcNAc (lipid intermediate II). The polypeptide is UDP-N-acetylglucosamine--N-acetylmuramyl-(pentapeptide) pyrophosphoryl-undecaprenol N-acetylglucosamine transferase (Photobacterium profundum (strain SS9)).